A 353-amino-acid chain; its full sequence is Melanin-concentrating hormone receptor 1 (353 aa).

The tract at residues 1-28 (MDLEASLLPTGPNASNTSDGPDNLTSAG) is disordered. Residues 1-45 (MDLEASLLPTGPNASNTSDGPDNLTSAGPPPRTGSISYVNIIMPS) lie on the Extracellular side of the membrane. Over residues 12-26 (PNASNTSDGPDNLTS) the composition is skewed to polar residues. N-linked (GlcNAc...) asparagine glycans are attached at residues N13, N16, and N23. A helical transmembrane segment spans residues 46–66 (VFGTICLLGIIGNSMVIFAVV). Residues 67 to 79 (KKSKLHWFSNVPD) lie on the Cytoplasmic side of the membrane. A helical transmembrane segment spans residues 80 to 100 (IFIINLSVVDLLFLLGMPFMI). Topologically, residues 101–116 (HQLMGNGVWHFGETMC) are extracellular. C116 and C194 form a disulfide bridge. Residues 117 to 139 (TLITAMDANSQFTSTYILTAMAI) traverse the membrane as a helical segment. The Cytoplasmic portion of the chain corresponds to 140–161 (DRYLATVHPISSTRFRKPSVAT). Residues 162 to 182 (LVICLLWALSIISITPVWLYA) form a helical membrane-spanning segment. Residues 183–204 (RLIPFPGGTVGCGIRLPNPDTD) lie on the Extracellular side of the membrane. Residues 205-225 (LYWFTLYQFFLAFALPFVVIT) form a helical membrane-spanning segment. Residues 226 to 256 (AAYVRILQRMTSSVAPASQRSIRLRTKRVTR) are Cytoplasmic-facing. The helical transmembrane segment at 257–277 (TAIAICLVFFVCWAPYYVLQL) threads the bilayer. Topologically, residues 278-294 (TQLSISRPTLTFVYLYN) are extracellular. Residues 295-315 (AAISLGYANSCLNPFVYIVLC) form a helical membrane-spanning segment. The Cytoplasmic segment spans residues 316–353 (ETFRKRLVLSVKPAAQGQLRAVSNAQTAEEERTESKGT).

The protein belongs to the G-protein coupled receptor 1 family. In terms of assembly, interacts with NCDN.

It localises to the cell membrane. Functionally, receptor for melanin-concentrating hormone, coupled to both G proteins that inhibit adenylyl cyclase and G proteins that activate phosphoinositide hydrolysis. In Sus scrofa (Pig), this protein is Melanin-concentrating hormone receptor 1.